Here is a 210-residue protein sequence, read N- to C-terminus: Protein GrpE (210 aa).

Positions Met1–Ser12 are enriched in basic and acidic residues. Disordered regions lie at residues Met1–Gly26 and Ile191–Ala210.

Belongs to the GrpE family. Homodimer.

The protein resides in the cytoplasm. Participates actively in the response to hyperosmotic and heat shock by preventing the aggregation of stress-denatured proteins, in association with DnaK and GrpE. It is the nucleotide exchange factor for DnaK and may function as a thermosensor. Unfolded proteins bind initially to DnaJ; upon interaction with the DnaJ-bound protein, DnaK hydrolyzes its bound ATP, resulting in the formation of a stable complex. GrpE releases ADP from DnaK; ATP binding to DnaK triggers the release of the substrate protein, thus completing the reaction cycle. Several rounds of ATP-dependent interactions between DnaJ, DnaK and GrpE are required for fully efficient folding. The sequence is that of Protein GrpE from Mesorhizobium japonicum (strain LMG 29417 / CECT 9101 / MAFF 303099) (Mesorhizobium loti (strain MAFF 303099)).